We begin with the raw amino-acid sequence, 140 residues long: Holo-[acyl-carrier-protein] synthase (140 aa).

Residues aspartate 9 and glutamate 63 each contribute to the Mg(2+) site.

The protein belongs to the P-Pant transferase superfamily. AcpS family. Mg(2+) serves as cofactor.

It localises to the cytoplasm. The catalysed reaction is apo-[ACP] + CoA = holo-[ACP] + adenosine 3',5'-bisphosphate + H(+). In terms of biological role, transfers the 4'-phosphopantetheine moiety from coenzyme A to a Ser of acyl-carrier-protein. This chain is Holo-[acyl-carrier-protein] synthase, found in Paraburkholderia phytofirmans (strain DSM 17436 / LMG 22146 / PsJN) (Burkholderia phytofirmans).